A 290-amino-acid polypeptide reads, in one-letter code: Agroclavine dehydrogenase (290 aa).

It belongs to the fgaFS/easG family. In terms of assembly, monomer.

The enzyme catalyses agroclavine + NADP(+) = didehydroagroclavine + NADPH + H(+). It functions in the pathway alkaloid biosynthesis; ergot alkaloid biosynthesis. Its function is as follows. Agroclavine dehydrogenase; part of the gene cluster that mediates the biosynthesis of fungal ergot alkaloid. DmaW catalyzes the first step of ergot alkaloid biosynthesis by condensing dimethylallyl diphosphate (DMAP) and tryptophan to form 4-dimethylallyl-L-tryptophan. The second step is catalyzed by the methyltransferase easF that methylates 4-dimethylallyl-L-tryptophan in the presence of S-adenosyl-L-methionine, resulting in the formation of 4-dimethylallyl-L-abrine. The catalase easC and the FAD-dependent oxidoreductase easE then transform 4-dimethylallyl-L-abrine to chanoclavine-I which is further oxidized by easD in the presence of NAD(+), resulting in the formation of chanoclavine-I aldehyde. Agroclavine dehydrogenase easG then mediates the conversion of chanoclavine-I aldehyde to agroclavine via a non-enzymatic adduct reaction: the substrate is an iminium intermediate that is formed spontaneously from chanoclavine-I aldehyde in the presence of glutathione. The presence of easA is not required to complete this reaction. Further conversion of agroclavine to paspalic acid is a two-step process involving oxidation of agroclavine to elymoclavine and of elymoclavine to paspalic acid, the second step being performed by the elymoclavine oxidase cloA. Paspalic acid is then further converted to D-lysergic acid. Ergopeptines are assembled from D-lysergic acid and three different amino acids by the D-lysergyl-peptide-synthetases composed each of a monomudular and a trimodular nonribosomal peptide synthetase subunit. LpsB and lpsC encode the monomodular subunits responsible for D-lysergic acid activation and incorporation into the ergopeptine backbone. LpsA1 and A2 subunits encode the trimodular nonribosomal peptide synthetase assembling the tripeptide portion of ergopeptines. LpsA1 is responsible for formation of the major ergopeptine, ergotamine, and lpsA2 for alpha-ergocryptine, the minor ergopeptine of the total alkaloid mixture elaborated by C.purpurea. D-lysergyl-tripeptides are assembled by the nonribosomal peptide synthetases and released as N-(D-lysergyl-aminoacyl)-lactams. Cyclolization of the D-lysergyl-tripeptides is performed by the Fe(2+)/2-ketoglutarate-dependent dioxygenase easH which introduces a hydroxyl group into N-(D-lysergyl-aminoacyl)-lactam at alpha-C of the aminoacyl residue followed by spontaneous condensation with the terminal lactam carbonyl group. The polypeptide is Agroclavine dehydrogenase (Claviceps purpurea (strain 20.1) (Ergot fungus)).